Consider the following 296-residue polypeptide: Glycine--tRNA ligase alpha subunit (296 aa).

Belongs to the class-II aminoacyl-tRNA synthetase family. Tetramer of two alpha and two beta subunits.

It is found in the cytoplasm. The enzyme catalyses tRNA(Gly) + glycine + ATP = glycyl-tRNA(Gly) + AMP + diphosphate. This chain is Glycine--tRNA ligase alpha subunit, found in Synechococcus sp. (strain CC9605).